A 454-amino-acid polypeptide reads, in one-letter code: Light-independent protochlorophyllide reductase subunit N (454 aa).

[4Fe-4S] cluster contacts are provided by C22, C47, and C107.

It belongs to the BchN/ChlN family. Protochlorophyllide reductase is composed of three subunits; ChlL, ChlN and ChlB. Forms a heterotetramer of two ChlB and two ChlN subunits. [4Fe-4S] cluster is required as a cofactor.

The protein localises to the plastid. Its subcellular location is the chloroplast. It carries out the reaction chlorophyllide a + oxidized 2[4Fe-4S]-[ferredoxin] + 2 ADP + 2 phosphate = protochlorophyllide a + reduced 2[4Fe-4S]-[ferredoxin] + 2 ATP + 2 H2O. It functions in the pathway porphyrin-containing compound metabolism; chlorophyll biosynthesis (light-independent). Functionally, component of the dark-operative protochlorophyllide reductase (DPOR) that uses Mg-ATP and reduced ferredoxin to reduce ring D of protochlorophyllide (Pchlide) to form chlorophyllide a (Chlide). This reaction is light-independent. The NB-protein (ChlN-ChlB) is the catalytic component of the complex. This chain is Light-independent protochlorophyllide reductase subunit N, found in Cycas taitungensis (Prince sago).